A 402-amino-acid chain; its full sequence is MSRRLFTSESVTEGHPDKIADQISDTILDALLREDPTSRVAVETLITTGLVHVAGEVTTKAYADIANLVRGKILEIGYDSSKKGFDGASCGVSVSIGAQSPDIAQGVDTAYENRVEGDEDELDRQGAGDQGLMFGYASDETPTLMPLPVFLAHRLSKRLSEVRKNGTIPYLRPDGKTQVTIEYDGDKAVRLDTVVVSSQHASDIDLESLLAPDIKEFVVEPELKALLEDGIKIDTENYRLLVNPTGRFEIGGPMGDAGLTGRKIIIDTYGGMARHGGGAFSGKDPSKVDRSAAYAMRWVAKNVVAAGLAARCEVQVAYAIGKAEPVGLFVETFGTAKVDTEKIEKAIDEVFDLRPAAIIRALDLLRPIYAQTAAYGHFGRELPDFTWERTDRVDALREAAGL.

His-15 provides a ligand contact to ATP. Asp-17 provides a ligand contact to Mg(2+). K(+) is bound at residue Glu-43. Residues Glu-56 and Gln-99 each coordinate L-methionine. The segment at 99 to 109 (QSPDIAQGVDT) is flexible loop. Residues 174–176 (DGK), 247–248 (RF), Asp-256, 262–263 (RK), Ala-279, and Lys-283 contribute to the ATP site. Asp-256 lines the L-methionine pocket. Lys-287 contacts L-methionine.

This sequence belongs to the AdoMet synthase family. Homotetramer; dimer of dimers. Mg(2+) serves as cofactor. It depends on K(+) as a cofactor.

The protein localises to the cytoplasm. It carries out the reaction L-methionine + ATP + H2O = S-adenosyl-L-methionine + phosphate + diphosphate. Its pathway is amino-acid biosynthesis; S-adenosyl-L-methionine biosynthesis; S-adenosyl-L-methionine from L-methionine: step 1/1. Functionally, catalyzes the formation of S-adenosylmethionine (AdoMet) from methionine and ATP. The overall synthetic reaction is composed of two sequential steps, AdoMet formation and the subsequent tripolyphosphate hydrolysis which occurs prior to release of AdoMet from the enzyme. This Streptomyces coelicolor (strain ATCC BAA-471 / A3(2) / M145) protein is S-adenosylmethionine synthase.